A 180-amino-acid polypeptide reads, in one-letter code: Transcription factor HES-7.1-A (180 aa).

One can recognise a bHLH domain in the interval 13–70 (HRKLLKPLVEKRRRERINNSLEKLRIFLFQTLKSEKLKNPKVEKAEILECTVQFLQSR). Positions 84 to 116 (YQSGFQHCLETTLHFMNSKPDMNGVTKELLSHQ) constitute an Orange domain. The short motif at 176-179 (WRPW) is the WRPW motif element.

As to quaternary structure, transcription repression requires formation of a complex with a corepressor protein of the Groucho/TLE family. Expressed in the presumptive midbrain-hindbrain boundary (MHB) as early as the early gastrula stage (stage 10.5). Expression in the MHB continues through to tailbud stage. Also transiently expressed in the eye anlage at late neurula stage.

It is found in the nucleus. Its function is as follows. Transcriptional repressor. Represses transcription from both N box- and E box-containing promoters. Demarcates the prospective midbrain-hindbrain boundary (MHB) region in the neuroectoderm in early gastrulae embryos by repressing transcription of a number of target genes. This Xenopus laevis (African clawed frog) protein is Transcription factor HES-7.1-A (hes7.1-a).